A 98-amino-acid polypeptide reads, in one-letter code: Large ribosomal subunit protein uL23 (98 aa).

It belongs to the universal ribosomal protein uL23 family. Part of the 50S ribosomal subunit. Contacts protein L29, and trigger factor when it is bound to the ribosome.

Its function is as follows. One of the early assembly proteins it binds 23S rRNA. One of the proteins that surrounds the polypeptide exit tunnel on the outside of the ribosome. Forms the main docking site for trigger factor binding to the ribosome. The polypeptide is Large ribosomal subunit protein uL23 (Koribacter versatilis (strain Ellin345)).